A 313-amino-acid polypeptide reads, in one-letter code: Olfactory receptor 56A4 (313 aa).

The Extracellular portion of the chain corresponds to 1–28 (MASPSNDSTAPVSEFLLICFPNFQSWQH). A glycan (N-linked (GlcNAc...) asparagine) is linked at asparagine 6. Residues 29–49 (WLSLPLSLLFLLAMGANTTLL) traverse the membrane as a helical segment. Residues 50 to 57 (ITIQLEAS) are Cytoplasmic-facing. A helical membrane pass occupies residues 58 to 78 (LHQPLYYLLSLLSLLDIVLCL). The Extracellular portion of the chain corresponds to 79–102 (TVIPKVLAIFWFDLRSISFPACFL). A disulfide bridge connects residues cysteine 100 and cysteine 192. Residues 103-123 (QMFIMNSFLTMESCTFMVMAY) traverse the membrane as a helical segment. The Cytoplasmic portion of the chain corresponds to 124-142 (DRYVAICHPLRYPSIITDQ). Residues 143 to 163 (FVARAVVFVIARNAFVSLPVP) form a helical membrane-spanning segment. At 164–199 (MLSARLRYCAGNIIKNCICSNLSVSKLSCDDITFNQ) the chain is on the extracellular side. Asparagine 184 carries N-linked (GlcNAc...) asparagine glycosylation. Residues 200 to 220 (LYQFVAGWTLLGSDLILIVIS) form a helical membrane-spanning segment. Over 221-240 (YSFILKVVLRIKAEGAVAKA) the chain is Cytoplasmic. A helical membrane pass occupies residues 241-261 (LSTCGSHFILILFFSTVLLVL). Over 262 to 276 (VITNLARKRIPPDVP) the chain is Extracellular. Residues 277–297 (ILLNILHHLIPPALNPIVYGV) form a helical membrane-spanning segment. The Cytoplasmic segment spans residues 298–313 (RTKEIKQGIQNLLKRL).

It belongs to the G-protein coupled receptor 1 family.

The protein resides in the cell membrane. Odorant receptor. The chain is Olfactory receptor 56A4 (OR56A4) from Homo sapiens (Human).